We begin with the raw amino-acid sequence, 473 residues long: Photosystem II CP43 reaction center protein (473 aa).

Residues 1–14 (MKTLYSLRRFYPVE) constitute a propeptide that is removed on maturation. Position 15 is an N-acetylthreonine (threonine 15). Threonine 15 carries the post-translational modification Phosphothreonine. The next 5 helical transmembrane spans lie at 69 to 93 (LFEV…PHLA), 134 to 155 (LLGP…KDRN), 178 to 200 (KALY…RKIT), 255 to 275 (KPFA…LSYS), and 291 to 312 (WFNN…ASQA). Position 367 (glutamate 367) interacts with [CaMn4O5] cluster. The chain crosses the membrane as a helical span at residues 447–471 (RARAAAAGFEKGIDRDLEPVLSMTP).

This sequence belongs to the PsbB/PsbC family. PsbC subfamily. In terms of assembly, PSII is composed of 1 copy each of membrane proteins PsbA, PsbB, PsbC, PsbD, PsbE, PsbF, PsbH, PsbI, PsbJ, PsbK, PsbL, PsbM, PsbT, PsbX, PsbY, PsbZ, Psb30/Ycf12, at least 3 peripheral proteins of the oxygen-evolving complex and a large number of cofactors. It forms dimeric complexes. Binds multiple chlorophylls and provides some of the ligands for the Ca-4Mn-5O cluster of the oxygen-evolving complex. It may also provide a ligand for a Cl- that is required for oxygen evolution. PSII binds additional chlorophylls, carotenoids and specific lipids. is required as a cofactor.

It localises to the plastid. The protein resides in the chloroplast thylakoid membrane. Its function is as follows. One of the components of the core complex of photosystem II (PSII). It binds chlorophyll and helps catalyze the primary light-induced photochemical processes of PSII. PSII is a light-driven water:plastoquinone oxidoreductase, using light energy to abstract electrons from H(2)O, generating O(2) and a proton gradient subsequently used for ATP formation. This Dioscorea elephantipes (Elephant's foot yam) protein is Photosystem II CP43 reaction center protein.